Consider the following 232-residue polypeptide: Phosphatidylserine decarboxylase proenzyme (232 aa).

Catalysis depends on serine 190, which acts as the Schiff-base intermediate with substrate; via pyruvic acid. The residue at position 190 (serine 190) is a Pyruvic acid (Ser); by autocatalysis.

This sequence belongs to the phosphatidylserine decarboxylase family. PSD-A subfamily. In terms of assembly, heterodimer of a large membrane-associated beta subunit and a small pyruvoyl-containing alpha subunit. Requires pyruvate as cofactor. Is synthesized initially as an inactive proenzyme. Formation of the active enzyme involves a self-maturation process in which the active site pyruvoyl group is generated from an internal serine residue via an autocatalytic post-translational modification. Two non-identical subunits are generated from the proenzyme in this reaction, and the pyruvate is formed at the N-terminus of the alpha chain, which is derived from the carboxyl end of the proenzyme. The post-translation cleavage follows an unusual pathway, termed non-hydrolytic serinolysis, in which the side chain hydroxyl group of the serine supplies its oxygen atom to form the C-terminus of the beta chain, while the remainder of the serine residue undergoes an oxidative deamination to produce ammonia and the pyruvoyl prosthetic group on the alpha chain.

Its subcellular location is the cell membrane. It catalyses the reaction a 1,2-diacyl-sn-glycero-3-phospho-L-serine + H(+) = a 1,2-diacyl-sn-glycero-3-phosphoethanolamine + CO2. The protein operates within phospholipid metabolism; phosphatidylethanolamine biosynthesis; phosphatidylethanolamine from CDP-diacylglycerol: step 2/2. Catalyzes the formation of phosphatidylethanolamine (PtdEtn) from phosphatidylserine (PtdSer). The protein is Phosphatidylserine decarboxylase proenzyme of Rhizobium rhizogenes (strain K84 / ATCC BAA-868) (Agrobacterium radiobacter).